The following is a 268-amino-acid chain: Undecaprenyl-diphosphatase (268 aa).

The next 7 membrane-spanning stretches (helical) occupy residues 5–25 (SIIS…IPVS), 43–63 (GNTF…LVYF), 84–104 (FSVL…HGFI), 107–127 (VLFE…IILY), 184–204 (AAEF…ALDL), 213–233 (FDDV…GIFV), and 248–268 (PFAI…WLLG).

This sequence belongs to the UppP family.

The protein localises to the cell inner membrane. The catalysed reaction is di-trans,octa-cis-undecaprenyl diphosphate + H2O = di-trans,octa-cis-undecaprenyl phosphate + phosphate + H(+). Its function is as follows. Catalyzes the dephosphorylation of undecaprenyl diphosphate (UPP). Confers resistance to bacitracin. This chain is Undecaprenyl-diphosphatase, found in Rhizobium meliloti (strain 1021) (Ensifer meliloti).